Reading from the N-terminus, the 264-residue chain is Thymidylate synthase (264 aa).

Arg21 contributes to the dUMP binding site. His51 is a binding site for (6R)-5,10-methylene-5,6,7,8-tetrahydrofolate. 126–127 (RR) contributes to the dUMP binding site. The active-site Nucleophile is Cys146. DUMP-binding positions include 166–169 (RSAD), Asn177, and 207–209 (HIY). Residue Asp169 participates in (6R)-5,10-methylene-5,6,7,8-tetrahydrofolate binding. A (6R)-5,10-methylene-5,6,7,8-tetrahydrofolate-binding site is contributed by Ser263.

It belongs to the thymidylate synthase family. Bacterial-type ThyA subfamily. As to quaternary structure, homodimer.

The protein resides in the cytoplasm. It carries out the reaction dUMP + (6R)-5,10-methylene-5,6,7,8-tetrahydrofolate = 7,8-dihydrofolate + dTMP. The protein operates within pyrimidine metabolism; dTTP biosynthesis. In terms of biological role, catalyzes the reductive methylation of 2'-deoxyuridine-5'-monophosphate (dUMP) to 2'-deoxythymidine-5'-monophosphate (dTMP) while utilizing 5,10-methylenetetrahydrofolate (mTHF) as the methyl donor and reductant in the reaction, yielding dihydrofolate (DHF) as a by-product. This enzymatic reaction provides an intracellular de novo source of dTMP, an essential precursor for DNA biosynthesis. This Phocaeicola vulgatus (strain ATCC 8482 / DSM 1447 / JCM 5826 / CCUG 4940 / NBRC 14291 / NCTC 11154) (Bacteroides vulgatus) protein is Thymidylate synthase.